We begin with the raw amino-acid sequence, 367 residues long: Leucine dehydrogenase (367 aa).

Lys-80 is a catalytic residue. 180-186 (GVGNVAY) contacts NAD(+).

Belongs to the Glu/Leu/Phe/Val dehydrogenases family. In terms of assembly, homohexamer.

It carries out the reaction L-leucine + NAD(+) + H2O = 4-methyl-2-oxopentanoate + NH4(+) + NADH + H(+). It functions in the pathway amino-acid degradation; L-leucine degradation; 4-methyl-2-oxopentanoate from L-leucine (dehydrogenase route): step 1/1. Functionally, catalyzes the reversible deamination of L-leucine to 4-methyl-2-oxopentanoate. This is Leucine dehydrogenase (ldh) from Geobacillus stearothermophilus (Bacillus stearothermophilus).